Reading from the N-terminus, the 343-residue chain is Cytoplasmic tRNA 2-thiolation protein 1 (343 aa).

The protein belongs to the TtcA family. CTU1/NCS6/ATPBD3 subfamily.

It is found in the cytoplasm. Its pathway is tRNA modification; 5-methoxycarbonylmethyl-2-thiouridine-tRNA biosynthesis. Functionally, plays a central role in 2-thiolation of mcm(5)S(2)U at tRNA wobble positions of tRNA(Lys), tRNA(Glu) and tRNA(Gln). Directly binds tRNAs and probably acts by catalyzing adenylation of tRNAs, an intermediate required for 2-thiolation. It is unclear whether it acts as a sulfurtransferase that transfers sulfur from thiocarboxylated URM1 onto the uridine of tRNAs at wobble position. This is Cytoplasmic tRNA 2-thiolation protein 1 from Drosophila sechellia (Fruit fly).